The chain runs to 406 residues: Pyridinium-3,5-bisthiocarboxylic acid mononucleotide nickel insertion protein (406 aa).

The protein belongs to the LarC family.

The catalysed reaction is Ni(II)-pyridinium-3,5-bisthiocarboxylate mononucleotide = pyridinium-3,5-bisthiocarboxylate mononucleotide + Ni(2+). In terms of biological role, involved in the biosynthesis of a nickel-pincer cofactor ((SCS)Ni(II) pincer complex). Binds Ni(2+), and functions in nickel delivery to pyridinium-3,5-bisthiocarboxylic acid mononucleotide (P2TMN), to form the mature cofactor. Is thus probably required for the activation of nickel-pincer cofactor-dependent enzymes. This Akkermansia muciniphila (strain ATCC BAA-835 / DSM 22959 / JCM 33894 / BCRC 81048 / CCUG 64013 / CIP 107961 / Muc) protein is Pyridinium-3,5-bisthiocarboxylic acid mononucleotide nickel insertion protein.